We begin with the raw amino-acid sequence, 231 residues long: MLHLDRLLIRQGDFTLRADATACAGERIAVIGPSGGGKSTLLMAIAGFLAPAEGRILWQGRDLGPLGPGERQVSLLFQDQNLFPHLTLRENLGLGISPALRLAAGDRARIAEALERVGLAGLGEAKPGRLSGGQQGRAALARALLRARPILLLDEPFAALGPALKAEMLALVSEIAAETGATVLMVTHDPEDARRFAHRTILVADGRAEAPQPTAALFADPPPALRAYLGP.

The region spanning 2–230 is the ABC transporter domain; it reads LHLDRLLIRQ…PPPALRAYLG (229 aa). An ATP-binding site is contributed by 32–39; that stretch reads GPSGGGKS.

Belongs to the ABC transporter superfamily. Thiamine importer (TC 3.A.1.19.1) family. In terms of assembly, the complex is composed of two ATP-binding proteins (ThiQ), two transmembrane proteins (ThiP) and a solute-binding protein (ThiB).

Its subcellular location is the cell inner membrane. It carries out the reaction thiamine(out) + ATP + H2O = thiamine(in) + ADP + phosphate + H(+). Its function is as follows. Part of the ABC transporter complex ThiBPQ involved in thiamine import. Responsible for energy coupling to the transport system. In Cereibacter sphaeroides (strain ATCC 17023 / DSM 158 / JCM 6121 / CCUG 31486 / LMG 2827 / NBRC 12203 / NCIMB 8253 / ATH 2.4.1.) (Rhodobacter sphaeroides), this protein is Thiamine import ATP-binding protein ThiQ.